The sequence spans 462 residues: MDKLTFPIFPAADLVNFFRQNILTGTEAKNFNKNDLYPNPKPEMVQKLYMRILQQVFSYGVEQFYMVPMDLDIQYPHLVEGFAPVANILKLMARLLPMCRVYDFHPSDVLNPKGKRTLHLLSGIFNFLQFRTTQREVYMEYCSGYKSALENVRQLQKTNHEAEIKIEKLTTVPPEQQAEFKALSSEIHDLQQIISQEYRAKDVMFQEKIAQRKAEFAEKNKRLNEQKLTIATMKEEQERMKSQIVESPEQRKSKTERMKETVHRLKQARQETSDKCDHYRDRVALAFMWQSDVQGYLKKLQNIDANLEIHRKIHEEIRHIEEQLMNLNLELKSLSNEDAQLKRIILVKKEKLAKVDIKNKKKQEDFNQQKQEILEVCSHIQEKRQVIHGRVAQVLQEIQQTISKKEQLLETTEAGKNKCQEVITDFRAALEKYHDSLQKASERSADRRREKIAELNRRLSRQ.

Residues 143 to 462 (SGYKSALENV…AELNRRLSRQ (320 aa)) are a coiled coil. The tract at residues 236 to 259 (EQERMKSQIVESPEQRKSKTERMK) is disordered. A compositionally biased stretch (basic and acidic residues) spans 248-259 (PEQRKSKTERMK).

It belongs to the NUF2 family. As to quaternary structure, component of the NDC80 complex, which is composed of ndc80, cdca1, spbc24 and spbc25. The NDC80 complex interacts with mis12 and zwint.

Its subcellular location is the nucleus. The protein resides in the chromosome. It is found in the centromere. The protein localises to the kinetochore. Acts as a component of the essential kinetochore-associated NDC80 complex, which is required for chromosome segregation and spindle checkpoint activity. Required for kinetochore integrity and the organization of stable microtubule binding sites in the outer plate of the kinetochore. The NDC80 complex synergistically enhances the affinity of the SKA1 complex for microtubules and may allow the NDC80 complex to track depolymerizing microtubules. This chain is Kinetochore protein Nuf2-B (nuf2-b), found in Xenopus laevis (African clawed frog).